We begin with the raw amino-acid sequence, 977 residues long: Kinesin-like protein KIN-7L, chloroplastic (977 aa).

Residues Met1 to Gly12 show a composition bias toward polar residues. Residues Met1–Asn66 form a disordered region. Composition is skewed to low complexity over residues Ser22–Ser31 and Ser38–Pro54. Residues Asn66–Ile385 enclose the Kinesin motor domain. Residue Gly146 to Thr153 coordinates ATP. The stretch at Glu386 to Lys471 forms a coiled coil. The tract at residues Asp549–Gly589 is disordered. Low complexity predominate over residues Ser551–Ser561. Polar residues predominate over residues Ala563–Gly575. 2 coiled-coil regions span residues Met626–Ile688 and Ile732–Glu942. The span at Ser864 to Leu876 shows a compositional bias: polar residues. Disordered regions lie at residues Ser864 to Glu891 and Ala958 to Thr977. The span at Gly879 to Glu891 shows a compositional bias: basic and acidic residues. The segment covering Ala958–Val967 has biased composition (polar residues). Residues Ser968–Thr977 show a composition bias toward basic and acidic residues.

Belongs to the TRAFAC class myosin-kinesin ATPase superfamily. Kinesin family. KIN-7 subfamily.

It is found in the plastid. The protein resides in the chloroplast. The protein is Kinesin-like protein KIN-7L, chloroplastic of Arabidopsis thaliana (Mouse-ear cress).